The sequence spans 269 residues: Holocytochrome-c synthase (269 aa).

A disordered region spans residues 1–72 (MGWFWADQKT…ASKQPGQKMD (72 aa)). HRM repeat units follow at residues 25–30 (GCPVMH) and 41–46 (ECPVMQ).

This sequence belongs to the cytochrome c-type heme lyase family.

It is found in the mitochondrion inner membrane. The protein resides in the mitochondrion intermembrane space. It carries out the reaction holo-[cytochrome c] = apo-[cytochrome c] + heme b. In terms of biological role, lyase that catalyzes the covalent linking of the heme group to the cytochrome C apoprotein to produce the mature functional cytochrome. This chain is Holocytochrome-c synthase (CYC3), found in Saccharomyces cerevisiae (strain ATCC 204508 / S288c) (Baker's yeast).